Consider the following 366-residue polypeptide: Tubulin-like protein CetZ (366 aa).

GTP is bound by residues 10–14, 103–105, Glu136, Asn163, and Asn181; these read QCGTK and GTG.

The protein belongs to the CetZ family.

It is found in the cytoplasm. Functionally, involved in cell shape control. In Pyrococcus furiosus (strain ATCC 43587 / DSM 3638 / JCM 8422 / Vc1), this protein is Tubulin-like protein CetZ.